Reading from the N-terminus, the 78-residue chain is Alpha-amylase inhibitor Haim-1 (78 aa).

2 disulfide bridges follow: C11-C27 and C45-C72.

In terms of biological role, inhibits mammalian alpha-amylases specifically but has no action on plant and microbial alpha-amylases. In Streptomyces griseosporeus, this protein is Alpha-amylase inhibitor Haim-1.